Consider the following 617-residue polypeptide: MIYDSIVIGAGHAGVEAALILAKKHNTLLITGSLKQVASLPCNPSIGGPAKGVVVREIDALGGVMAKAADLAQIQIKMLNSSKGPAVRALRAQIDKLEYPQIIFEILQKTLNLTLLEGLVNNLVIQNNQVQGVCLIDGTKINAKTVIITTGTYLASQILIGDTKKSSGPNGVPTTYGISTQLKELGFEVIRLKTGTPPRVKKNSIDYSQTKIQMGDNLEQIFSFVPQTNQRPQEPCFLTHTNQTTHQVIQKHLNQSAMYGGYVEGTGPRYCPSIEDKVVRFCDKNSHQIFIEPESLSLDEMYLQGLSTSMPQHVQHEILKTIPGLQNAQITKYAYAIEYDAFNPNQLKHSLETKKIQNLFLAGQMNGTSGYEEAACQGLMAGINASLKLQNKPPFVLKRNEAYIGVLIDDLITKGAKEPYRLLTSRAEFRLLLRHDNADLRLKDYGYQLGLIDEKDYNNFQNKKAKINLLLEKSKNYEILVNSDNLSYLKQQKSASLGEKTTLAQLLKRPELNFCTLQHFLQEKADKTIYEQVEIQIKYEGYIAKAQKEAQKLARLEQKKIPSKINYADIKNLSKEAQEKLDLIKPQTLGQATRILGVNQVDISILLVYLEKHHALL.

FAD contacts are provided by residues Gly9–Gly14, Val120, and Thr175. Residue Gly267 to Phe281 coordinates NAD(+). Gln364 contributes to the FAD binding site.

This sequence belongs to the MnmG family. In terms of assembly, homodimer. Heterotetramer of two MnmE and two MnmG subunits. It depends on FAD as a cofactor.

The protein localises to the cytoplasm. In terms of biological role, NAD-binding protein involved in the addition of a carboxymethylaminomethyl (cmnm) group at the wobble position (U34) of certain tRNAs, forming tRNA-cmnm(5)s(2)U34. The chain is tRNA uridine 5-carboxymethylaminomethyl modification enzyme MnmG from Onion yellows phytoplasma (strain OY-M).